A 303-amino-acid chain; its full sequence is Coenzyme PQQ synthesis protein B (303 aa).

Belongs to the PqqB family.

It functions in the pathway cofactor biosynthesis; pyrroloquinoline quinone biosynthesis. May be involved in the transport of PQQ or its precursor to the periplasm. This Pseudomonas putida (strain GB-1) protein is Coenzyme PQQ synthesis protein B.